The sequence spans 299 residues: 6-phosphogluconate dehydrogenase, NAD(+)-dependent, decarboxylating (299 aa).

NAD(+)-binding positions include 7–12, 67–69, and Asn-95; these read GLGRMG and VPA. Substrate contacts are provided by Asn-95, Ser-118, and Gly-120. Residue Lys-169 is the Proton acceptor of the active site. Position 172–173 (172–173) interacts with substrate; the sequence is HN. The Proton donor role is filled by Glu-176. Substrate-binding residues include Tyr-177 and Arg-268.

It belongs to the 6-phosphogluconate dehydrogenase family. In terms of assembly, homotetramer.

It catalyses the reaction 6-phospho-D-gluconate + NAD(+) = D-ribulose 5-phosphate + CO2 + NADH. It functions in the pathway carbohydrate degradation; pentose phosphate pathway. Its function is as follows. Catalyzes the oxidative decarboxylation of 6-phosphogluconate to ribulose 5-phosphate and CO(2), with concomitant reduction of NAD to NADH. This chain is 6-phosphogluconate dehydrogenase, NAD(+)-dependent, decarboxylating, found in Haloferax volcanii (strain ATCC 29605 / DSM 3757 / JCM 8879 / NBRC 14742 / NCIMB 2012 / VKM B-1768 / DS2) (Halobacterium volcanii).